We begin with the raw amino-acid sequence, 321 residues long: tRNA U34 carboxymethyltransferase (321 aa).

Carboxy-S-adenosyl-L-methionine-binding positions include K90, W104, K109, G129, 151 to 153 (DPT), 180 to 181 (IE), M195, Y199, and R314.

This sequence belongs to the class I-like SAM-binding methyltransferase superfamily. CmoB family. Homotetramer.

It carries out the reaction carboxy-S-adenosyl-L-methionine + 5-hydroxyuridine(34) in tRNA = 5-carboxymethoxyuridine(34) in tRNA + S-adenosyl-L-homocysteine + H(+). Functionally, catalyzes carboxymethyl transfer from carboxy-S-adenosyl-L-methionine (Cx-SAM) to 5-hydroxyuridine (ho5U) to form 5-carboxymethoxyuridine (cmo5U) at position 34 in tRNAs. This Histophilus somni (strain 2336) (Haemophilus somnus) protein is tRNA U34 carboxymethyltransferase.